Here is a 607-residue protein sequence, read N- to C-terminus: MDAKPWNHTSEAFQASILEDLKIIQKAGAERNAKSSHGSINSRSASPNKATSRRNRAQNGNSNGRASVDNSDDGSKDDLDYSPSVKRKHVNGEGAEKGDHDTSNNGPSITKLRRKVRRTYDTKDGFVAWNTLDDDFRPIVPDQERSRKINPQKGNNNNLLKENKSLKTTAKDLSDISSSSMKKANNSSKPLFSGKLTFKANIPVPTSEVVTENNVTRNVTVYSNQKHLGNESENFNDMEGRAEDISSNELLPTPEEYPYRYNNDYCSACHGPGNFLCCETCPNSFHFTCIDPPIEEKNLPDDAWYCNECKHHSLYNELDEQEELESNVKEEGTMVDVWMQLCTYIDSHNPIQFHLPHSISSFFRGVGSGVMGEYIETDVLKHLKSSRRSNGEERDPLLLKSKSGTPILCFRCHKSALVSQSILACDYCNSYWHPDCLNPPLATLPSNLRKWKCPNHSDHVTPRYRLPEKAKVIRVGLPRGFKNKGNIVIDENEDEPSVQTIQLQGKIRVVPSKPFKLNFLEQIRDNVINLRKMVEQDEQLCIETFSKFDFYATRDCELPLRILCDVANDNLENDDYVLALRDLLRISKWDPNQPVPAPFDLANLLSY.

Disordered regions lie at residues 28–114 (GAER…KLRR) and 142–188 (DQER…NNSS). Over residues 35-50 (SSHGSINSRSASPNKA) the composition is skewed to polar residues. Composition is skewed to basic and acidic residues over residues 90 to 102 (VNGEGAEKGDHDT) and 161 to 174 (KENKSLKTTAKDLS). Residues 177–188 (SSSSMKKANNSS) show a composition bias toward low complexity. PHD-type zinc fingers lie at residues 263-312 (NDYC…CKHH) and 406-459 (PILC…HSDH).

This is an uncharacterized protein from Schizosaccharomyces pombe (strain 972 / ATCC 24843) (Fission yeast).